The primary structure comprises 218 residues: dTTP/UTP pyrophosphatase (218 aa).

Positions 1–10 (MTASPSSAEG) are enriched in polar residues. The tract at residues 1-20 (MTASPSSAEGSSGLPDRPKL) is disordered. Residue Asp87 is the Proton acceptor of the active site.

It belongs to the Maf family. YhdE subfamily. Requires a divalent metal cation as cofactor.

It localises to the cytoplasm. The enzyme catalyses dTTP + H2O = dTMP + diphosphate + H(+). It carries out the reaction UTP + H2O = UMP + diphosphate + H(+). Functionally, nucleoside triphosphate pyrophosphatase that hydrolyzes dTTP and UTP. May have a dual role in cell division arrest and in preventing the incorporation of modified nucleotides into cellular nucleic acids. This chain is dTTP/UTP pyrophosphatase, found in Gluconobacter oxydans (strain 621H) (Gluconobacter suboxydans).